Consider the following 798-residue polypeptide: Serine/threonine-protein kinase SIK2 (798 aa).

In terms of domain architecture, Protein kinase spans 26 to 277; sequence YDIERTLGKG…ISQIKQHKWM (252 aa). ATP contacts are provided by residues 32 to 40 and lysine 55; that span reads LGKGNFAVV. Aspartate 148 serves as the catalytic Proton acceptor. At threonine 181 the chain carries Phosphothreonine. Serine 185 is modified (phosphoserine). The region spanning 302-342 is the UBA domain; sequence DYNEQVLGIMQTLGIDRQRTVESLQNSSYNHFAAIYYLLLE. Polar residues predominate over residues 351–361; it reads QLSSRPATGRQ. The tract at residues 351–382 is disordered; the sequence is QLSSRPATGRQQRPRSSEISNAEMPQDSLTSE. At serine 575 the chain carries Phosphoserine. The tract at residues 672 to 691 is disordered; the sequence is ACPQTSQTSATNGLPPSDSA. Residues 673-685 are compositionally biased toward polar residues; the sequence is CPQTSQTSATNGL.

This sequence belongs to the protein kinase superfamily. CAMK Ser/Thr protein kinase family. SNF1 subfamily. Requires Mg(2+) as cofactor. In terms of processing, phosphorylated at Thr-181 by STK11/LKB1 in complex with STE20-related adapter-alpha (STRADA) pseudo kinase and CAB39. Ubiquitously expressed in embryonic tissue.

The protein resides in the cytoplasm. The catalysed reaction is L-seryl-[protein] + ATP = O-phospho-L-seryl-[protein] + ADP + H(+). It carries out the reaction L-threonyl-[protein] + ATP = O-phospho-L-threonyl-[protein] + ADP + H(+). Activated by phosphorylation on Thr-181. Functionally, phosphorylates IRS1 in insulin-stimulated adipocytes, potentially modulating the efficiency of insulin signal transduction. Inhibits CREB activity by phosphorylating and repressing the CREB-specific coactivators, CRTC1-3. This chain is Serine/threonine-protein kinase SIK2 (SIK2), found in Gallus gallus (Chicken).